Reading from the N-terminus, the 398-residue chain is Putative L-rhamnonate dehydratase (398 aa).

2 residues coordinate substrate: His-29 and Arg-55. Mg(2+) is bound by residues Asp-221, Glu-247, and Glu-274. His-324 (proton acceptor) is an active-site residue. Glu-344 serves as a coordination point for substrate.

Belongs to the mandelate racemase/muconate lactonizing enzyme family. RhamD subfamily. Mg(2+) serves as cofactor.

The catalysed reaction is L-rhamnonate = 2-dehydro-3-deoxy-L-rhamnonate + H2O. Functionally, catalyzes the dehydration of L-rhamnonate to 2-keto-3-deoxy-L-rhamnonate (KDR). In Caldivirga maquilingensis (strain ATCC 700844 / DSM 13496 / JCM 10307 / IC-167), this protein is Putative L-rhamnonate dehydratase.